The sequence spans 575 residues: Acetolactate synthase large subunit (575 aa).

Residue glutamate 57 participates in thiamine diphosphate binding. Residues arginine 159, 265 to 286, and 308 to 327 contribute to the FAD site; these read HGSY…LGSR and DIDA…ILSD. Residues 395-475 form a thiamine pyrophosphate binding region; it reads QHQMWVAQYY…IKVVLINNHS (81 aa). Mg(2+) is bound by residues aspartate 446 and asparagine 473.

This sequence belongs to the TPP enzyme family. As to quaternary structure, dimer of large and small chains. Mg(2+) serves as cofactor. Thiamine diphosphate is required as a cofactor.

It catalyses the reaction 2 pyruvate + H(+) = (2S)-2-acetolactate + CO2. The protein operates within amino-acid biosynthesis; L-isoleucine biosynthesis; L-isoleucine from 2-oxobutanoate: step 1/4. Its pathway is amino-acid biosynthesis; L-valine biosynthesis; L-valine from pyruvate: step 1/4. The polypeptide is Acetolactate synthase large subunit (ilvB) (Lactococcus lactis subsp. lactis (strain IL1403) (Streptococcus lactis)).